The following is a 208-amino-acid chain: Protein Nef (208 aa).

Gly2 is lipidated: N-myristoyl glycine; by host. A Phosphoserine; by host modification is found at Ser6. Positions 16-51 (IRERMRRTPPTPPAAEGVGAVSQDLERRGAITSSNT) are disordered. An acidic; interacts with host PACS1 and PACS2; stabilizes the interaction of NEF/MHC-I with host AP1M1; necessary for MHC-I internalization region spans residues 65-68 (EEDE). The segment at 72–81 (PVRPQVPLRP) is SH3-binding; interaction with Src family tyrosine kinases. The PxxP; stabilizes the interaction of NEF/MHC-I with host AP1M1; necessary for MHC-I internalization motif lies at 75–78 (PQVP). Residues 111–127 (EILDLWVYHTQGYFPDW) form a mediates dimerization, Nef-PTE1 interaction region. The tract at residues 151 to 183 (VDPEEVEKANEGENNCLLHPMSQHGMEDEDKEV) is binding to ATP6V1H. Positions 167 to 168 (LL) match the Dileucine internalization motif; necessary for CD4 internalization motif. Residues 177–178 (ED) carry the Diacidic; necessary for CD4 internalization motif.

The protein belongs to the lentivirus primate group Nef protein family. In terms of assembly, monomer; cytosolic form. Homodimer; membrane bound form. Interacts with Nef associated p21-activated kinase (PAK2); this interaction activates PAK2. Associates with the Nef-MHC-I-AP1 complex; this complex is required for MHC-I internalization. Interacts (via C-terminus) with host PI3-kinase. Interacts with host PACS1; this interaction seems to be weak. Interacts with host PACS2. Interacts with host LCK and MAPK3; these interactions inhibit the kinase activity of the latter. Interacts with host ATP6V1H; this interaction may play a role in CD4 endocytosis. Associates with the CD4-Nef-AP2 complex; this complex is required for CD4 internalization. Interacts with host AP2 subunit alpha and AP2 subunit sigma2. Interacts with TCR-zeta chain; this interaction up-regulates the Fas ligand (FasL) surface expression. Interacts with host HCK, LYN, and SRC; these interactions activate the Src family kinases. Interacts with MAP3K5; this interaction inhibits the Fas and TNFR-mediated death signals. Interacts with beta-COP and PTE1. Interacts with human RACK1; this increases Nef phosphorylation by PKC. Interacts with TP53; this interaction decreases the half-life of TP53, protecting the infected cell against p53-mediated apoptosis. In terms of processing, the virion-associated Nef proteins are cleaved by the viral protease to release the soluble C-terminal core protein. Nef is probably cleaved concomitantly with viral structural proteins on maturation of virus particles. Post-translationally, myristoylated. Phosphorylated on serine residues, probably by host PKCdelta and theta.

It is found in the host cell membrane. The protein localises to the virion. Its subcellular location is the secreted. It localises to the host Golgi apparatus membrane. Functionally, factor of infectivity and pathogenicity, required for optimal virus replication. Alters numerous pathways of T-lymphocyte function and down-regulates immunity surface molecules in order to evade host defense and increase viral infectivity. Alters the functionality of other immunity cells, like dendritic cells, monocytes/macrophages and NK cells. Its function is as follows. In infected CD4(+) T-lymphocytes, down-regulates the surface MHC-I, mature MHC-II, CD4, CD28, CCR5 and CXCR4 molecules. Mediates internalization and degradation of host CD4 through the interaction of with the cytoplasmic tail of CD4, the recruitment of AP-2 (clathrin adapter protein complex 2), internalization through clathrin coated pits, and subsequent transport to endosomes and lysosomes for degradation. Diverts host MHC-I molecules to the trans-Golgi network-associated endosomal compartments by an endocytic pathway to finally target them for degradation. MHC-I down-regulation may involve AP-1 (clathrin adapter protein complex 1) or possibly Src family kinase-ZAP70/Syk-PI3K cascade recruited by PACS2. In consequence infected cells are masked for immune recognition by cytotoxic T-lymphocytes. Decreasing the number of immune receptors also prevents reinfection by more HIV particles (superinfection). Down-regulates host SERINC3 and SERINC5 thereby excluding these proteins from the viral particles. Virion infectivity is drastically higher when SERINC3 or SERINC5 are excluded from the viral envelope, because these host antiviral proteins impair the membrane fusion event necessary for subsequent virion penetration. Bypasses host T-cell signaling by inducing a transcriptional program nearly identical to that of anti-CD3 cell activation. Interaction with TCR-zeta chain up-regulates the Fas ligand (FasL). Increasing surface FasL molecules and decreasing surface MHC-I molecules on infected CD4(+) cells send attacking cytotoxic CD8+ T-lymphocytes into apoptosis. In terms of biological role, plays a role in optimizing the host cell environment for viral replication without causing cell death by apoptosis. Protects the infected cells from apoptosis in order to keep them alive until the next virus generation is ready to strike. Inhibits the Fas and TNFR-mediated death signals by blocking MAP3K5/ASK1. Decreases the half-life of TP53, protecting the infected cell against p53-mediated apoptosis. Inhibits the apoptotic signals regulated by the Bcl-2 family proteins through the formation of a Nef/PI3-kinase/PAK2 complex that leads to activation of PAK2 and induces phosphorylation of host BAD. Functionally, extracellular Nef protein targets CD4(+) T-lymphocytes for apoptosis by interacting with CXCR4 surface receptors. The polypeptide is Protein Nef (Human immunodeficiency virus type 1 group M subtype F1 (isolate 93BR020) (HIV-1)).